Reading from the N-terminus, the 458-residue chain is MSCKTPPTLQELAENSLLKNQDLAISALDDIPSLFFPSLFKKACRNRYVGIIKAMVQAWPFPCLPLGAMISRKTAYRRILEIILYGLDALLSQKVPHSRCKLQVLDLRVMPLKLWNRLPVFGTAGCSENPAVVGHSGTEVKQPVKVLVDLVLKESPLDSTESFLVQWVDNRNGLVSLCCCKLQIWAMSMYYHRKLLEILDLDSVQELRMYCISNPVCLLNFAPYLGRMRNLRCLILSHLWQTFSMTPVEKQQVITQFTSQFLKLKCLQILHLDTVFFLEGHLDELFWWLKTPLETLSVIDCNLSKSDWFHISEFQCTSQLKHLNLKWVKLTHLSPEPLRVLLLKSASTLTSLDLEGCQMMDSQLSAILPALRCCTQLTKFNFHGNYISMPILRELAYNVVKQKSQQSKIRFIPSCSHHSGLEFEAISQPHIVFVDVDRTTGEQEQVLFYAICSGEYVL.

The stretch at 99 to 126 (RCKLQVLDLRVMPLKLWNRLPVFGTAGC) is one LRR 1; degenerate repeat. The stretch at 176 to 200 (SLCCCKLQIWAMSMYYHRKLLEILD) is one LRR 2; degenerate repeat. One copy of the LRR 3; degenerate repeat lies at 201 to 227 (LDSVQELRMYCISNPVCLLNFAPYLGR). One copy of the LRR 4; degenerate repeat lies at 228–263 (MRNLRCLILSHLWQTFSMTPVEKQQVITQFTSQFLK). LRR repeat units follow at residues 264–289 (LKCLQILHLDTVFFLEGHLDELFWWL), 290–321 (KTPLETLSVIDCNLSKSDWFHISEFQCTSQLK), 322–340 (HLNLKWVKLTHLSPEPLRV), 346–373 (ASTLTSLDLEGCQMMDSQLSAILPALRC), and 374–398 (CTQLTKFNFHGNYISMPILRELAYN).

It belongs to the PRAME family. In terms of tissue distribution, specifically expressed in testis (at protein level).

The protein localises to the cytoplasm. Its subcellular location is the cytoplasmic vesicle. It localises to the secretory vesicle. It is found in the acrosome. The protein resides in the cell projection. The protein localises to the cilium. Its subcellular location is the flagellum. In terms of biological role, may play a role in acrosome development and also in sperm maturation and motility. This Mus musculus (Mouse) protein is Preferentially expressed antigen in melanoma-like protein 1.